The sequence spans 190 residues: Inosine triphosphate pyrophosphatase (190 aa).

Thr-8–Lys-13 contacts ITP. Glu-37 contributes to the Mg(2+) binding site. Residues Lys-49, Asp-65–Thr-66, Lys-82, Phe-140–Asp-143, Lys-163, and His-168–Arg-169 contribute to the ITP site.

The protein belongs to the HAM1 NTPase family. As to quaternary structure, homodimer. It depends on Mg(2+) as a cofactor. Requires Mn(2+) as cofactor.

The protein resides in the cytoplasm. The protein localises to the nucleus. It carries out the reaction ITP + H2O = IMP + diphosphate + H(+). It catalyses the reaction dITP + H2O = dIMP + diphosphate + H(+). The catalysed reaction is XTP + H2O = XMP + diphosphate + H(+). Its function is as follows. Pyrophosphatase that hydrolyzes non-canonical purine nucleotides such as inosine triphosphate (ITP), deoxyinosine triphosphate (dITP) or xanthosine 5'-triphosphate (XTP) to their respective monophosphate derivatives. The enzyme does not distinguish between the deoxy- and ribose forms. Probably excludes non-canonical purines from RNA and DNA precursor pools, thus preventing their incorporation into RNA and DNA and avoiding chromosomal lesions. In Batrachochytrium dendrobatidis (strain JAM81 / FGSC 10211) (Frog chytrid fungus), this protein is Inosine triphosphate pyrophosphatase.